We begin with the raw amino-acid sequence, 47 residues long: Large ribosomal subunit protein bL34 (47 aa).

The segment at 1–28 (MAKGKRTFQPNNRRRARVHGFRTRMRTR) is disordered.

Belongs to the bacterial ribosomal protein bL34 family.

The sequence is that of Large ribosomal subunit protein bL34 from Corynebacterium efficiens (strain DSM 44549 / YS-314 / AJ 12310 / JCM 11189 / NBRC 100395).